The following is a 1092-amino-acid chain: Electroneutral sodium bicarbonate exchanger 1 (1092 aa).

Disordered regions lie at residues 1–26, 55–95, and 243–263; these read MPAG…VDQG, LGRQ…HDTP, and KKQS…PQSA. Topologically, residues 1–478 are extracellular; it reads MPAGSNEPDG…DYRDALSLQC (478 aa). Residues 58–76 are compositionally biased toward basic residues; that stretch reads QSHRHHRTHGQKHRRRGGR. A compositionally biased stretch (basic and acidic residues) spans 243-255; the sequence is KKQSDPHSMDRDG. A helical membrane pass occupies residues 479–499; sequence LASFLFLYCACMSPVITFGGL. At 500–507 the chain is on the cytoplasmic side; that stretch reads LGEATEGR. A helical membrane pass occupies residues 508-528; that stretch reads ISAIESLFGASMTGIAYSLFA. The Extracellular segment spans residues 529–565; the sequence is GQPLTILGSTGPVLVFEKILFKFCKDYALSYLSLRAC. Residues 566-586 form a helical membrane-spanning segment; it reads IGLWTAFLCIVLVATDASSLV. Topologically, residues 587–595 are cytoplasmic; it reads CYITRFTEE. The chain crosses the membrane as a helical span at residues 596–616; that stretch reads AFASLICIIFIYEAIEKLIHL. Over 617-687 the chain is Extracellular; sequence AETYPIHMHS…EFIGSACGHH (71 aa). 2 disulfide bridges follow: C636–C684 and C638–C672. 2 N-linked (GlcNAc) asparagine glycosylation sites follow: N646 and N666. A helical transmembrane segment spans residues 688-708; it reads GPYTPDVLFWSCILFFATFIV. Residues 709–731 are Cytoplasmic-facing; sequence SSTLKTFKTSRYFPTRVRSTVSD. Residues 732 to 752 form a helical membrane-spanning segment; that stretch reads FAVFLTIFTMVILDFLIGVPS. Over 753 to 778 the chain is Extracellular; that stretch reads PKLQVPSVFKPTRDDRGWFISPIGPN. The helical transmembrane segment at 779–799 threads the bilayer; sequence PWWTVIAAIIPALLCTILIFM. Residues 800-824 are Cytoplasmic-facing; it reads DQQITAVIINRKEHKLKKGCGYHLD. Residues 825–845 form a helical membrane-spanning segment; it reads LLVVAIMLGVCSLMGLPWFVA. At 846-881 the chain is on the extracellular side; that stretch reads ATVLSITHVNSLKLESECSAPGEQPKFLGIREQRVT. A helical transmembrane segment spans residues 882–902; that stretch reads GLMIFVLMGCSVFMTAVLKFI. Topologically, residues 903-904 are cytoplasmic; sequence PM. The chain crosses the membrane as a helical span at residues 905 to 925; it reads PVLYGVFLYMGVSSLQGIQFF. The Extracellular portion of the chain corresponds to 926–962; it reads DRLKLFGMPAKHQPDFIYLRHVPLRKVHLFTLVQLTC. Residues 963-983 form a helical membrane-spanning segment; it reads LVLLWVIKASPAAIVFPMMVL. The Cytoplasmic segment spans residues 984–1092; it reads ALVFVRKVMD…GNTKEKSPFN (109 aa).

Belongs to the anion exchanger (TC 2.A.31) family. Homodimer. In terms of tissue distribution, expressed in the Purkinje cells and dendrites in the molecular layer of the cerebellum (at protein level). Expressed in the hippocampal neurons (at protein level). Strong expression observed in testis and moderate expression in kidney inner medulla, the submandibular gland, eye, cerebrum and cerebellum.

Its subcellular location is the cell membrane. The protein localises to the apical cell membrane. The protein resides in the basolateral cell membrane. It localises to the cytoplasmic vesicle. It is found in the secretory vesicle. Its subcellular location is the synaptic vesicle membrane. It catalyses the reaction 2 hydrogencarbonate(out) + chloride(in) + Na(+)(out) = 2 hydrogencarbonate(in) + chloride(out) + Na(+)(in). Its function is as follows. Mediates electroneutral sodium- and carbonate-dependent chloride-HCO3(-) exchange with a Na(+):HCO3(-) stoichiometry of 2:1. Plays a major role in pH regulation in neurons. Mediates sodium reabsorption in the renal cortical collecting ducts. The sequence is that of Electroneutral sodium bicarbonate exchanger 1 from Rattus norvegicus (Rat).